An 810-amino-acid polypeptide reads, in one-letter code: Eukaryotic translation initiation factor 3 subunit C (810 aa).

Over residues 1-11 the composition is skewed to polar residues; that stretch reads MSRFFATNYNY. A disordered region spans residues 1–98; that stretch reads MSRFFATNYN…DSDESDEEDG (98 aa). Residues 12 to 33 are compositionally biased toward low complexity; it reads DETSSSSEEDLLSSSEELLSSS. Residues 34 to 58 show a composition bias toward acidic residues; that stretch reads EEGELSDDSLFNDESESESDFDSDD. The 176-residue stretch at 605–780 folds into the PCI domain; it reads YHQHINLDLV…TYIVIEKGDE (176 aa).

Belongs to the eIF-3 subunit C family. Component of the eukaryotic translation initiation factor 3 (eIF-3) complex.

The protein resides in the cytoplasm. Its function is as follows. Component of the eukaryotic translation initiation factor 3 (eIF-3) complex, which is involved in protein synthesis of a specialized repertoire of mRNAs and, together with other initiation factors, stimulates binding of mRNA and methionyl-tRNAi to the 40S ribosome. The eIF-3 complex specifically targets and initiates translation of a subset of mRNAs involved in cell proliferation. This is Eukaryotic translation initiation factor 3 subunit C from Candida glabrata (strain ATCC 2001 / BCRC 20586 / JCM 3761 / NBRC 0622 / NRRL Y-65 / CBS 138) (Yeast).